Consider the following 277-residue polypeptide: Elongation factor 1-delta (277 aa).

The residue at position 2 (Ala-2) is an N-acetylalanine. At Lys-17 the chain carries N6-acetyllysine. Ser-37, Ser-44, Ser-60, Ser-86, and Ser-106 each carry phosphoserine. N6-acetyllysine is present on Lys-107. The segment at 113–171 (SALEKSSPAHRATTPQTQHVSPMRQVEPPSRKAATATEDDEDDDIDLFGSDEEEDKEAA) is disordered. The residue at position 117 (Lys-117) is an N6-acetyllysine; alternate. At Lys-117 the chain carries N6-succinyllysine; alternate. Residue Ser-119 is modified to Phosphoserine. Residue Thr-129 is modified to Phosphothreonine. Ser-133 bears the Phosphoserine mark. Thr-147 carries the post-translational modification Phosphothreonine. Residues 149–168 (TEDDEDDDIDLFGSDEEEDK) are compositionally biased toward acidic residues. Ser-162 bears the Phosphoserine; by CK2 mark.

This sequence belongs to the EF-1-beta/EF-1-delta family. In terms of assembly, EF-1 is composed of 4 subunits: alpha, beta, delta, and gamma.

Its function is as follows. EF-1-beta and EF-1-delta stimulate the exchange of GDP bound to EF-1-alpha to GTP. In Ovis aries (Sheep), this protein is Elongation factor 1-delta (EEF1D).